Reading from the N-terminus, the 367-residue chain is C-glycoside deglycosidase alpha subunit (367 aa).

Residue Glu146 coordinates Mg(2+). The Proton acceptor role is filled by His148. Positions 178, 276, and 312 each coordinate Mg(2+).

The protein belongs to the C-glycoside deglycosidase alpha subunit family. In terms of assembly, heterodimer composed of an alpha subunit (CarB1) and a beta subunit (CarC1). Mg(2+) serves as cofactor.

It catalyses the reaction 3''-dehydroisovitexin = 1,5-anhydro-D-erythro-hex-1-en-3-ulose + apigenin. Activity is strongly reduced in the presence of chelating agents. Functionally, carbon-carbon bond-cleaving enzyme which participates in the metabolism of C-glycosides. Acts on the C6-glycosylated compound 3''-dehydroisovitexin (3''-oxo-isovitexin). Shows weak activity with 3''-dehydroisoorientin (3''-oxo-homoorientin) and 3'-dehydromangiferin (3'-oxo-mangiferin). The polypeptide is C-glycoside deglycosidase alpha subunit (Arthrobacter globiformis (strain ATCC 8010 / DSM 20124 / JCM 1332 / NBRC 12137 / NCIMB 8907 / NRRL B-2979 / 168)).